A 203-amino-acid chain; its full sequence is MPEIVLVGRSNVGKSSLIRAITRGAADVRVGKRPGVTRKPVFHELDGELVLVDMPGFGFMSGVPRRYQERVKDLIVRYLEEKDNILFAIHVVDAKALPEIAERWERRGEIPIDREMFQFLNEVGLDPIVAANKIDKIKPIEFEEHMDAVAEALGLFPPWRQWLDTLFPISAKTGEGLVEFLEALQERVRKAGYPEFARFFRTK.

The EngB-type G domain occupies 1-190; the sequence is MPEIVLVGRS…LEALQERVRK (190 aa). Residues 8-15, 35-39, 53-56, 132-135, and 169-171 each bind GTP; these read GRSNVGKS, GVTRK, DMPG, NKID, and ISA. Residues serine 15 and threonine 37 each coordinate Mg(2+).

This sequence belongs to the TRAFAC class TrmE-Era-EngA-EngB-Septin-like GTPase superfamily. EngB GTPase family. The cofactor is Mg(2+).

Necessary for normal cell division and for the maintenance of normal septation. This is Probable GTP-binding protein EngB from Methanopyrus kandleri (strain AV19 / DSM 6324 / JCM 9639 / NBRC 100938).